The chain runs to 533 residues: Bifunctional purine biosynthesis protein PurH (533 aa).

Positions 1–148 constitute an MGS-like domain; it reads MQPNRPIRQA…KNHQDVAIVV (148 aa).

This sequence belongs to the PurH family.

It catalyses the reaction (6R)-10-formyltetrahydrofolate + 5-amino-1-(5-phospho-beta-D-ribosyl)imidazole-4-carboxamide = 5-formamido-1-(5-phospho-D-ribosyl)imidazole-4-carboxamide + (6S)-5,6,7,8-tetrahydrofolate. It carries out the reaction IMP + H2O = 5-formamido-1-(5-phospho-D-ribosyl)imidazole-4-carboxamide. Its pathway is purine metabolism; IMP biosynthesis via de novo pathway; 5-formamido-1-(5-phospho-D-ribosyl)imidazole-4-carboxamide from 5-amino-1-(5-phospho-D-ribosyl)imidazole-4-carboxamide (10-formyl THF route): step 1/1. It participates in purine metabolism; IMP biosynthesis via de novo pathway; IMP from 5-formamido-1-(5-phospho-D-ribosyl)imidazole-4-carboxamide: step 1/1. The chain is Bifunctional purine biosynthesis protein PurH from Pasteurella multocida (strain Pm70).